We begin with the raw amino-acid sequence, 353 residues long: Adenine deaminase (353 aa).

Residues H19, H21, and H208 each coordinate Zn(2+). Catalysis depends on E211, which acts as the Proton donor. Residue D289 participates in Zn(2+) binding. Position 290 (D290) interacts with substrate.

The protein belongs to the metallo-dependent hydrolases superfamily. Adenosine and AMP deaminases family. Adenine deaminase type 2 subfamily. Requires Zn(2+) as cofactor.

Its subcellular location is the cytoplasm. It localises to the nucleus. It carries out the reaction adenine + H2O + H(+) = hypoxanthine + NH4(+). Its function is as follows. Catalyzes the hydrolytic deamination of adenine to hypoxanthine. Plays an important role in the purine salvage pathway and in nitrogen catabolism. In Gibberella zeae (strain ATCC MYA-4620 / CBS 123657 / FGSC 9075 / NRRL 31084 / PH-1) (Wheat head blight fungus), this protein is Adenine deaminase.